We begin with the raw amino-acid sequence, 367 residues long: Phosphoribosylaminoimidazole-succinocarboxamide synthase (367 aa).

The protein belongs to the SAICAR synthetase family.

It carries out the reaction 5-amino-1-(5-phospho-D-ribosyl)imidazole-4-carboxylate + L-aspartate + ATP = (2S)-2-[5-amino-1-(5-phospho-beta-D-ribosyl)imidazole-4-carboxamido]succinate + ADP + phosphate + 2 H(+). Its pathway is purine metabolism; IMP biosynthesis via de novo pathway; 5-amino-1-(5-phospho-D-ribosyl)imidazole-4-carboxamide from 5-amino-1-(5-phospho-D-ribosyl)imidazole-4-carboxylate: step 1/2. The chain is Phosphoribosylaminoimidazole-succinocarboxamide synthase from Colwellia psychrerythraea (strain 34H / ATCC BAA-681) (Vibrio psychroerythus).